Consider the following 198-residue polypeptide: Chromophore lyase CpcT/CpeT 3 (198 aa).

This sequence belongs to the CpcT/CpeT biliprotein lyase family.

In terms of biological role, covalently attaches a chromophore to Cys residue(s) of phycobiliproteins. This is Chromophore lyase CpcT/CpeT 3 from Synechococcus sp. (strain JA-3-3Ab) (Cyanobacteria bacterium Yellowstone A-Prime).